A 417-amino-acid chain; its full sequence is Putative F-box protein At3g58950 (417 aa).

Positions 1 to 53 (MDLFSSLPDEVLCHILSFLTTKEAALASVVSKRWRNQFALVPNLDIDEEGKRE) constitute an F-box domain.

This chain is Putative F-box protein At3g58950, found in Arabidopsis thaliana (Mouse-ear cress).